The chain runs to 261 residues: RING finger and CHY zinc finger domain-containing protein 1 (261 aa).

Residues 13–80 (QERGQRGCEH…AQQTCEECST (68 aa)) form a CHY-type zinc finger. Positions 20, 22, 33, 34, 40, 43, 44, 50, 62, 65, 75, 78, 87, 90, 101, 102, 105, 108, 118, 119, 122, 125, 134, and 136 each coordinate Zn(2+). A CTCHY-type zinc finger spans residues 82 to 144 (FGEYYCDICH…KCIENVSRQN (63 aa)). An RING-type zinc finger spans residues 145-189 (CPICLEDIHTSRVVAHVLPCGHLLHRTCYEEMLKEGYRCPLCMHS). Ser-257 carries the post-translational modification Phosphoserine.

As to quaternary structure, monomer and homodimer. Interacts with AR, MDM2, KAT5, PLAG1, PLAGL2, COPE, UBE2D2 and GORAB/NTKLBP1. Subject to ubiquitination and proteasomal degradation. Interaction with PLAGL2 or KAT5 enhances protein stability.

The protein localises to the nucleus. It is found in the nucleus speckle. Its subcellular location is the cytoplasm. It catalyses the reaction S-ubiquitinyl-[E2 ubiquitin-conjugating enzyme]-L-cysteine + [acceptor protein]-L-lysine = [E2 ubiquitin-conjugating enzyme]-L-cysteine + N(6)-ubiquitinyl-[acceptor protein]-L-lysine.. Its pathway is protein modification; protein ubiquitination. Functionally, E3 ubiquitin-protein ligase that mediates ubiquitination of target proteins, including p53/TP53, TP73, HDAC1 and CDKN1B. Mediates ubiquitination and degradation of p53/TP53; preferentially acts on tetrameric p53/TP53. Catalyzes monoubiquitinates the translesion DNA polymerase POLH. Involved in the ribosome-associated quality control (RQC) pathway, which mediates the extraction of incompletely synthesized nascent chains from stalled ribosomes: RCHY1 acts downstream of NEMF and recognizes CAT tails associated with stalled nascent chains, leading to their ubiquitination and degradation. Has no E3 ubiquitin-protein ligase activity. The sequence is that of RING finger and CHY zinc finger domain-containing protein 1 (RCHY1) from Homo sapiens (Human).